The following is a 131-amino-acid chain: Profilin-5 (131 aa).

It belongs to the profilin family. In terms of assembly, occurs in many kinds of cells as a complex with monomeric actin in a 1:1 ratio.

It is found in the cytoplasm. The protein localises to the cytoskeleton. Its function is as follows. Binds to actin and affects the structure of the cytoskeleton. At high concentrations, profilin prevents the polymerization of actin, whereas it enhances it at low concentrations. By binding to PIP2, it inhibits the formation of IP3 and DG. The chain is Profilin-5 from Hevea brasiliensis (Para rubber tree).